Consider the following 527-residue polypeptide: Glutamate--cysteine ligase (527 aa).

This sequence belongs to the glutamate--cysteine ligase type 1 family. Type 1 subfamily.

It carries out the reaction L-cysteine + L-glutamate + ATP = gamma-L-glutamyl-L-cysteine + ADP + phosphate + H(+). The protein operates within sulfur metabolism; glutathione biosynthesis; glutathione from L-cysteine and L-glutamate: step 1/2. In Pseudomonas aeruginosa (strain UCBPP-PA14), this protein is Glutamate--cysteine ligase.